The following is a 156-amino-acid chain: Protein-export protein SecB (156 aa).

The protein belongs to the SecB family. Homotetramer, a dimer of dimers. One homotetramer interacts with 1 SecA dimer.

It is found in the cytoplasm. One of the proteins required for the normal export of preproteins out of the cell cytoplasm. It is a molecular chaperone that binds to a subset of precursor proteins, maintaining them in a translocation-competent state. It also specifically binds to its receptor SecA. The chain is Protein-export protein SecB from Aliivibrio fischeri (strain ATCC 700601 / ES114) (Vibrio fischeri).